A 63-amino-acid polypeptide reads, in one-letter code: MAEDKFEQAKGNIKETVGNATDNKELEKDGKGDKASGKAKEAVENVKEKANDVIDKFKGNKGD.

The disordered stretch occupies residues 1–46 (MAEDKFEQAKGNIKETVGNATDNKELEKDGKGDKASGKAKEAVENV). Basic and acidic residues predominate over residues 22-46 (DNKELEKDGKGDKASGKAKEAVENV).

It belongs to the UPF0337 (CsbD) family.

This is UPF0337 protein SERP0494 from Staphylococcus epidermidis (strain ATCC 35984 / DSM 28319 / BCRC 17069 / CCUG 31568 / BM 3577 / RP62A).